The primary structure comprises 285 residues: Polyamine aminopropyltransferase (285 aa).

In terms of domain architecture, PABS spans 5–241; that stretch reads DNWYIEHFQP…GWWSVTMASK (237 aa). An S-methyl-5'-thioadenosine-binding site is contributed by glutamine 35. 2 residues coordinate spermidine: histidine 66 and aspartate 90. S-methyl-5'-thioadenosine contacts are provided by residues aspartate 110 and 141 to 142; that span reads DG. Residue aspartate 160 is the Proton acceptor of the active site. 160–163 is a spermidine binding site; sequence DSTD. Residue proline 167 coordinates S-methyl-5'-thioadenosine.

This sequence belongs to the spermidine/spermine synthase family. Homodimer or homotetramer.

Its subcellular location is the cytoplasm. It catalyses the reaction S-adenosyl 3-(methylsulfanyl)propylamine + putrescine = S-methyl-5'-thioadenosine + spermidine + H(+). The protein operates within amine and polyamine biosynthesis; spermidine biosynthesis; spermidine from putrescine: step 1/1. Catalyzes the irreversible transfer of a propylamine group from the amino donor S-adenosylmethioninamine (decarboxy-AdoMet) to putrescine (1,4-diaminobutane) to yield spermidine. In Xanthomonas oryzae pv. oryzae (strain MAFF 311018), this protein is Polyamine aminopropyltransferase.